We begin with the raw amino-acid sequence, 732 residues long: DNA ligase (732 aa).

Residues 47 to 51, 96 to 97, and Glu133 contribute to the NAD(+) site; these read DAEYD and SI. The active-site N6-AMP-lysine intermediate is the Lys135. NAD(+) is bound by residues Arg156, Glu196, Lys317, and Lys341. Residues Cys470, Cys473, Cys488, and Cys494 each contribute to the Zn(2+) site. Positions 653–732 constitute a BRCT domain; it reads RATLPLAGKT…AGMLALLQGR (80 aa).

This sequence belongs to the NAD-dependent DNA ligase family. LigA subfamily. Mg(2+) serves as cofactor. It depends on Mn(2+) as a cofactor.

It catalyses the reaction NAD(+) + (deoxyribonucleotide)n-3'-hydroxyl + 5'-phospho-(deoxyribonucleotide)m = (deoxyribonucleotide)n+m + AMP + beta-nicotinamide D-nucleotide.. In terms of biological role, DNA ligase that catalyzes the formation of phosphodiester linkages between 5'-phosphoryl and 3'-hydroxyl groups in double-stranded DNA using NAD as a coenzyme and as the energy source for the reaction. It is essential for DNA replication and repair of damaged DNA. This is DNA ligase from Paracidovorax citrulli (strain AAC00-1) (Acidovorax citrulli).